Consider the following 455-residue polypeptide: Fez family zinc finger protein 2 (455 aa).

The disordered stretch occupies residues 1–22; that stretch reads MASSASLETMVPPACPRAGASP. The Engrailed homology 1 repressor motif lies at 27-42; it reads TLAFSIERIMAKTSEP. C2H2-type zinc fingers lie at residues 272-294, 300-322, 328-350, 356-378, 384-406, and 412-435; these read FTCEVCGKVFNAHYNLTRHMPVH, FVCKVCGKGFRQASTLCRHKIIH, HKCNQCGKAFNRSSTLNTHIRIH, FVCEFCGKGFHQKGNYKNHKLTH, YKCTICNKAFHQVYNLTFHMHTH, and FTCATCGKGFCRNFDLKKHVRKLH.

This sequence belongs to the krueppel C2H2-type zinc-finger protein family. In terms of tissue distribution, highly expressed in neocortical layer V, moderately expressed in layer VI. Expressed in subcortically projecting neurons.

It is found in the nucleus. Its function is as follows. Transcription repressor. Required for the specification of corticospinal motor neurons and other subcerebral projection neurons. May play a role in layer and neuronal subtype-specific patterning of subcortical projections and axonal fasciculation. Controls the development of dendritic arborization and spines of large layer V pyramidal neurons. Plays a role in rostro-caudal patterning of the diencephalon and in prethalamic formation. This is Fez family zinc finger protein 2 (Fezf2) from Mus musculus (Mouse).